A 573-amino-acid polypeptide reads, in one-letter code: 2-succinyl-5-enolpyruvyl-6-hydroxy-3-cyclohexene-1-carboxylate synthase (573 aa).

It belongs to the TPP enzyme family. MenD subfamily. Homodimer. Requires Mg(2+) as cofactor. It depends on Mn(2+) as a cofactor. The cofactor is thiamine diphosphate.

The catalysed reaction is isochorismate + 2-oxoglutarate + H(+) = 5-enolpyruvoyl-6-hydroxy-2-succinyl-cyclohex-3-ene-1-carboxylate + CO2. It functions in the pathway quinol/quinone metabolism; 1,4-dihydroxy-2-naphthoate biosynthesis; 1,4-dihydroxy-2-naphthoate from chorismate: step 2/7. The protein operates within quinol/quinone metabolism; menaquinone biosynthesis. Catalyzes the thiamine diphosphate-dependent decarboxylation of 2-oxoglutarate and the subsequent addition of the resulting succinic semialdehyde-thiamine pyrophosphate anion to isochorismate to yield 2-succinyl-5-enolpyruvyl-6-hydroxy-3-cyclohexene-1-carboxylate (SEPHCHC). This is 2-succinyl-5-enolpyruvyl-6-hydroxy-3-cyclohexene-1-carboxylate synthase from Shewanella sp. (strain W3-18-1).